The following is a 325-amino-acid chain: Beta-ketoacyl-[acyl-carrier-protein] synthase III (325 aa).

Residues C116 and H252 contribute to the active site. The ACP-binding stretch occupies residues Q253–R257. Residue N282 is part of the active site.

The protein belongs to the thiolase-like superfamily. FabH family. Homodimer.

The protein localises to the cytoplasm. The enzyme catalyses malonyl-[ACP] + acetyl-CoA + H(+) = 3-oxobutanoyl-[ACP] + CO2 + CoA. Its pathway is lipid metabolism; fatty acid biosynthesis. In terms of biological role, catalyzes the condensation reaction of fatty acid synthesis by the addition to an acyl acceptor of two carbons from malonyl-ACP. Catalyzes the first condensation reaction which initiates fatty acid synthesis and may therefore play a role in governing the total rate of fatty acid production. Possesses both acetoacetyl-ACP synthase and acetyl transacylase activities. Its substrate specificity determines the biosynthesis of branched-chain and/or straight-chain of fatty acids. This is Beta-ketoacyl-[acyl-carrier-protein] synthase III from Xanthomonas campestris pv. campestris (strain ATCC 33913 / DSM 3586 / NCPPB 528 / LMG 568 / P 25).